The primary structure comprises 157 residues: Phosphopantetheine adenylyltransferase (157 aa).

Serine 8 lines the substrate pocket. Residues 8–9 (SF) and histidine 16 each bind ATP. Substrate is bound by residues lysine 40, leucine 72, and arginine 86. ATP-binding positions include 87–89 (GLR), glutamate 97, and 121–127 (FGTISSS).

This sequence belongs to the bacterial CoaD family. Homohexamer. Mg(2+) serves as cofactor.

Its subcellular location is the cytoplasm. The enzyme catalyses (R)-4'-phosphopantetheine + ATP + H(+) = 3'-dephospho-CoA + diphosphate. It participates in cofactor biosynthesis; coenzyme A biosynthesis; CoA from (R)-pantothenate: step 4/5. Functionally, reversibly transfers an adenylyl group from ATP to 4'-phosphopantetheine, yielding dephospho-CoA (dPCoA) and pyrophosphate. The polypeptide is Phosphopantetheine adenylyltransferase (Cutibacterium acnes (strain DSM 16379 / KPA171202) (Propionibacterium acnes)).